The chain runs to 414 residues: Tryptophan synthase beta chain (414 aa).

Residues 1–26 (MVSTFSRQDQNYKNDDLNQPSKEGRF) are disordered. Residues 10–26 (QNYKNDDLNQPSKEGRF) are compositionally biased toward basic and acidic residues. The residue at position 109 (K109) is an N6-(pyridoxal phosphate)lysine.

The protein belongs to the TrpB family. As to quaternary structure, tetramer of two alpha and two beta chains. Pyridoxal 5'-phosphate is required as a cofactor.

It carries out the reaction (1S,2R)-1-C-(indol-3-yl)glycerol 3-phosphate + L-serine = D-glyceraldehyde 3-phosphate + L-tryptophan + H2O. It functions in the pathway amino-acid biosynthesis; L-tryptophan biosynthesis; L-tryptophan from chorismate: step 5/5. Functionally, the beta subunit is responsible for the synthesis of L-tryptophan from indole and L-serine. This chain is Tryptophan synthase beta chain, found in Prochlorococcus marinus (strain MIT 9312).